The following is a 222-amino-acid chain: Disulfide bond formation protein D (222 aa).

The N-terminal stretch at 1–36 (MKKKQQSSAKFAVILTVVVVVLLAAIVIINNKTEQG) is a signal peptide. The 184-residue stretch at 37–220 (NDAVSGQPSI…IKETIEKELK (184 aa)) folds into the Thioredoxin domain. C69 and C72 are joined by a disulfide.

This sequence belongs to the thioredoxin family. DsbA subfamily.

Its subcellular location is the cell membrane. The protein localises to the membrane raft. Required for the stabilization, possibly via formation of a disulfide bond, of the obligatory competence protein ComGC. May be required for the stability of secreted proteins with disulfide bonds. Not required for sporulation. This is Disulfide bond formation protein D (bdbD) from Bacillus subtilis (strain 168).